The sequence spans 296 residues: Nucleotide-binding protein SGO_0954 (296 aa).

Position 13 to 20 (13 to 20) interacts with ATP; sequence GMSGAGKT. 63–66 contributes to the GTP binding site; that stretch reads DMRS.

Belongs to the RapZ-like family.

Functionally, displays ATPase and GTPase activities. The chain is Nucleotide-binding protein SGO_0954 from Streptococcus gordonii (strain Challis / ATCC 35105 / BCRC 15272 / CH1 / DL1 / V288).